The primary structure comprises 226 residues: Putative N-acetylmannosamine-6-phosphate 2-epimerase 1 (226 aa).

It belongs to the NanE family.

The catalysed reaction is an N-acyl-D-glucosamine 6-phosphate = an N-acyl-D-mannosamine 6-phosphate. Its pathway is amino-sugar metabolism; N-acetylneuraminate degradation; D-fructose 6-phosphate from N-acetylneuraminate: step 3/5. Converts N-acetylmannosamine-6-phosphate (ManNAc-6-P) to N-acetylglucosamine-6-phosphate (GlcNAc-6-P). The chain is Putative N-acetylmannosamine-6-phosphate 2-epimerase 1 from Salmonella paratyphi A (strain ATCC 9150 / SARB42).